The chain runs to 730 residues: Catalase-peroxidase (730 aa).

The tract at residues 1–25 (MEEKKCPVTGHTQHTPTGGGTKNKD) is disordered. A cross-link (tryptophyl-tyrosyl-methioninium (Trp-Tyr) (with M-244)) is located at residues 95–218 (WHSAGTYRLN…LAAVQMGLIY (124 aa)). Catalysis depends on histidine 96, which acts as the Proton acceptor. The tryptophyl-tyrosyl-methioninium (Tyr-Met) (with W-95) cross-link spans 218–244 (YVNPEGPNGQPSVLASGRDVRDTFKRM). Histidine 259 contacts heme b.

Belongs to the peroxidase family. Peroxidase/catalase subfamily. As to quaternary structure, homodimer or homotetramer. Requires heme b as cofactor. In terms of processing, formation of the three residue Trp-Tyr-Met cross-link is important for the catalase, but not the peroxidase activity of the enzyme.

The catalysed reaction is H2O2 + AH2 = A + 2 H2O. The enzyme catalyses 2 H2O2 = O2 + 2 H2O. In terms of biological role, bifunctional enzyme with both catalase and broad-spectrum peroxidase activity. The chain is Catalase-peroxidase from Desulfitobacterium hafniense (strain Y51).